Reading from the N-terminus, the 179-residue chain is Trypsin inhibitor (179 aa).

Gln1 carries the post-translational modification Pyrrolidone carboxylic acid. 2 disulfides stabilise this stretch: Cys40–Cys85 and Cys132–Cys143.

It belongs to the protease inhibitor I3 (leguminous Kunitz-type inhibitor) family. As to quaternary structure, heterodimer of an alpha and a beta chain linked by a disulfide bond. Abundant in dry seeds.

The protein resides in the secreted. Its function is as follows. Inhibits trypsin, plasmin, human plasma kallikrein, chymotrypsin and factor XIIa activity. The protein is Trypsin inhibitor of Leucaena leucocephala (White popinac).